We begin with the raw amino-acid sequence, 266 residues long: Thymidylate synthase (266 aa).

Position 24 (R24) interacts with dUMP. H54 is a binding site for (6R)-5,10-methylene-5,6,7,8-tetrahydrofolate. 129–130 (RR) contributes to the dUMP binding site. C149 serves as the catalytic Nucleophile. Residues 169-172 (RSAD), N180, and 210-212 (HIY) each bind dUMP. D172 is a binding site for (6R)-5,10-methylene-5,6,7,8-tetrahydrofolate. Residue A265 coordinates (6R)-5,10-methylene-5,6,7,8-tetrahydrofolate.

It belongs to the thymidylate synthase family. Bacterial-type ThyA subfamily. In terms of assembly, homodimer.

It localises to the cytoplasm. It catalyses the reaction dUMP + (6R)-5,10-methylene-5,6,7,8-tetrahydrofolate = 7,8-dihydrofolate + dTMP. Its pathway is pyrimidine metabolism; dTTP biosynthesis. Functionally, catalyzes the reductive methylation of 2'-deoxyuridine-5'-monophosphate (dUMP) to 2'-deoxythymidine-5'-monophosphate (dTMP) while utilizing 5,10-methylenetetrahydrofolate (mTHF) as the methyl donor and reductant in the reaction, yielding dihydrofolate (DHF) as a by-product. This enzymatic reaction provides an intracellular de novo source of dTMP, an essential precursor for DNA biosynthesis. The chain is Thymidylate synthase from Nocardia farcinica (strain IFM 10152).